Reading from the N-terminus, the 141-residue chain is Hemoglobin subunit alpha (141 aa).

The region spanning Val-1–Arg-141 is the Globin domain. O2 is bound at residue His-58. His-87 contacts heme b.

The protein belongs to the globin family. Heterotetramer of two alpha chains and two beta chains. As to expression, red blood cells.

Involved in oxygen transport from the lung to the various peripheral tissues. The polypeptide is Hemoglobin subunit alpha (HBA) (Caiman crocodilus (Spectacled caiman)).